The following is a 324-amino-acid chain: Ribosomal RNA small subunit methyltransferase H (324 aa).

S-adenosyl-L-methionine contacts are provided by residues 41 to 43, D60, Y87, D111, and Q118; that span reads GGH.

It belongs to the methyltransferase superfamily. RsmH family.

The protein localises to the cytoplasm. It catalyses the reaction cytidine(1402) in 16S rRNA + S-adenosyl-L-methionine = N(4)-methylcytidine(1402) in 16S rRNA + S-adenosyl-L-homocysteine + H(+). Specifically methylates the N4 position of cytidine in position 1402 (C1402) of 16S rRNA. This Nocardia farcinica (strain IFM 10152) protein is Ribosomal RNA small subunit methyltransferase H.